The following is a 940-amino-acid chain: Lon protease homolog 1, mitochondrial (940 aa).

The transit peptide at 1–61 (MLKLFTSSAS…AFFCSEPTNG (61 aa)) directs the protein to the mitochondrion. The disordered stretch occupies residues 70 to 90 (KAVESDSEVSDSKSSSAIVPT). Position 74 is a phosphoserine (S74). The Lon N-terminal domain occupies 100-309 (VLALPVPHRP…LTLELMKKEM (210 aa)). 464–471 (GPPGVGKT) serves as a coordination point for ATP. A Lon proteolytic domain is found at 751–935 (QTPVGVVMGL…GKIFELAFGY (185 aa)). Catalysis depends on residues S841 and K884.

This sequence belongs to the peptidase S16 family. Homohexamer or homoheptamer. Organized in a ring with a central cavity.

Its subcellular location is the mitochondrion matrix. The enzyme catalyses Hydrolysis of proteins in presence of ATP.. ATP-dependent serine protease that mediates the selective degradation of misfolded, unassembled or oxidatively damaged polypeptides as well as certain short-lived regulatory proteins in the mitochondrial matrix. May also have a chaperone function in the assembly of inner membrane protein complexes. Participates in the regulation of mitochondrial gene expression and in the maintenance of the integrity of the mitochondrial genome. Binds to mitochondrial DNA in a site-specific manner. The sequence is that of Lon protease homolog 1, mitochondrial (LON1) from Arabidopsis thaliana (Mouse-ear cress).